The chain runs to 767 residues: Tetratricopeptide repeat protein 16 (767 aa).

TPR repeat units lie at residues 18–51, 53–85, 93–126, 128–155, 208–241, 242–275, 288–321, 322–355, and 363–396; these read VREY…DPKL, DFYV…DPGN, AFVL…QPQN, SFSY…REVK, AKQS…NPLD, PNFF…VTDT, LLTY…EQNE, KGLY…SPLD, and GVLQ…SPQK. Positions 612–733 are disordered; that stretch reads EVTPAYGQRD…DSLSFSEISS (122 aa). The segment covering 684 to 718 has biased composition (polar residues); sequence QRSSQKVTKTPSLTHSTTHSDIGESANDTPGQTPW.

This Mus musculus (Mouse) protein is Tetratricopeptide repeat protein 16 (Ttc16).